A 667-amino-acid polypeptide reads, in one-letter code: MSNAHHDAFDKATKAGFIIALGIVYGDIGTSPLYTMQSLVDNQGGLSQVSEAFILGSVSLIIWTLTLVTTIKYVLIALKADNHHEGGIFSLFTLVRRMSRWLIIPAMLGGATLLSDGALTPAVTVTSAIEGLKAVPELSSIYQNQTNVILTTLLILMVLFGLQRFGTGVIGKLFGPVMLVWFSVLGISGLLNSLQHLEILKAINPYYALHLLVSPENHRGIFILGSIFLATTGAEALYSDLGHVGRGNIYASWPFVKVCIILSYCGQAAWILAHKDSGIALNPFFASVPEGLRVYLVILATLAAIIASQALISGSFTLVSEAMRLKIFPLFKITYPGANLGQLYIPVINWSLFAVTSCTVLYFRTSAHMEAAYGLAITITMLMTTILLAYYLIKEGVKPLLASLLMAFFAFIEFIFFLASAVKFMHGGYVVVVLALAIVFVMVIWHAGTVIVAKYVKSLSLNDYKHQIKLLRDDLRFDLYQTNVVYLTNRMKKDLIDRSILYSILDKRPKRAQVYWFVNVRVTDEPYTATYKVDMLGTDYIVCVELYLGFRMPQTVPRYLRTIVQDLMESGRLPKQVQDYTITPGREVGDFRFVIIEERVSYARQLSTLERFVMQTKASIKHVTASPMRWFGLQYSEATVEVVPLLLSDVLKLPIKEIKACTKDEKA.

12 helical membrane passes run G16–M36, V58–L78, W101–P121, T146–G166, T167–I187, I221–L241, W253–A273, V294–G314, L343–F363, Y373–I393, P399–A419, and V431–I451.

Belongs to the HAK/KUP transporter (TC 2.A.72) family.

The protein resides in the cell membrane. The catalysed reaction is K(+)(in) + H(+)(in) = K(+)(out) + H(+)(out). Functionally, transport of potassium into the cell. Likely operates as a K(+):H(+) symporter. The chain is Probable potassium transport system protein Kup from Streptococcus equi subsp. zooepidemicus (strain H70).